Reading from the N-terminus, the 188-residue chain is uncharacterized protein (188 aa).

Residues I62–K77 carry the L5-specific motif motif.

The protein resides in the mitochondrion. This is an uncharacterized protein from Dictyostelium discoideum (Social amoeba).